We begin with the raw amino-acid sequence, 522 residues long: tRNA-2-methylthio-N(6)-dimethylallyladenosine synthase (522 aa).

The span at 1–26 (MSLTIPSPASGTSTSATTDTAPAAAP) shows a compositional bias: low complexity. The disordered stretch occupies residues 1-27 (MSLTIPSPASGTSTSATTDTAPAAAPQ). Residues 28–143 (RTYQVRTFGC…LPALLDRARH (116 aa)) enclose the MTTase N-terminal domain. 6 residues coordinate [4Fe-4S] cluster: Cys-37, Cys-72, Cys-106, Cys-180, Cys-184, and Cys-187. One can recognise a Radical SAM core domain in the interval 166–396 (RDSVYSGWVS…TALQDRIAAE (231 aa)). The TRAM domain maps to 399-469 (ARQLGRRVEV…AFHLVADPAS (71 aa)). The disordered stretch occupies residues 481-522 (GDAWDRSQADSCGAPVAGGGAGSNGGKGGVSLGMPALPVRRS). The span at 496-511 (VAGGGAGSNGGKGGVS) shows a compositional bias: gly residues.

It belongs to the methylthiotransferase family. MiaB subfamily. In terms of assembly, monomer. [4Fe-4S] cluster is required as a cofactor.

The protein localises to the cytoplasm. It catalyses the reaction N(6)-dimethylallyladenosine(37) in tRNA + (sulfur carrier)-SH + AH2 + 2 S-adenosyl-L-methionine = 2-methylsulfanyl-N(6)-dimethylallyladenosine(37) in tRNA + (sulfur carrier)-H + 5'-deoxyadenosine + L-methionine + A + S-adenosyl-L-homocysteine + 2 H(+). Its function is as follows. Catalyzes the methylthiolation of N6-(dimethylallyl)adenosine (i(6)A), leading to the formation of 2-methylthio-N6-(dimethylallyl)adenosine (ms(2)i(6)A) at position 37 in tRNAs that read codons beginning with uridine. In Arthrobacter sp. (strain FB24), this protein is tRNA-2-methylthio-N(6)-dimethylallyladenosine synthase.